A 614-amino-acid chain; its full sequence is Syringomycin synthase SyrB1 (614 aa).

Residues 535 to 610 (KGLSEQEHFV…VLADHITRSL (76 aa)) enclose the Carrier domain. Ser570 carries the O-(pantetheine 4'-phosphoryl)serine modification.

Belongs to the ATP-dependent AMP-binding enzyme family. Pantetheine 4'-phosphate is required as a cofactor.

It catalyses the reaction holo-[peptidyl-carrier protein] + L-threonine + ATP = L-threonyl-[peptidyl-carrier protein] + AMP + diphosphate. Involved in the biosynthesis of syringomycin E, a cyclic lipodepsinonapeptide toxin with phytotoxic activity. Specifically adenylates L-threonine and loads it onto its peptidyl carrier domain, via a thioester linkage to the phosphopanthetheine moiety. Is highly specific for L-threonine. The protein is Syringomycin synthase SyrB1 of Pseudomonas syringae pv. syringae.